Reading from the N-terminus, the 117-residue chain is MKVGKAKKKPEIFSAHCSVATAFLDPSFFYPNFVAQKASHYNDKTGSANIWTYISRTGSLLLFTQVVYRKSKWTHQSATFADCIYCQSGQSPSVSLSCSDARQTWMQHRGWSSLMSL.

It localises to the cytoplasm. The protein resides in the nucleus. This is an uncharacterized protein from Saccharomyces cerevisiae (strain ATCC 204508 / S288c) (Baker's yeast).